The chain runs to 1174 residues: Tight junction protein 2 (1174 aa).

One can recognise a PDZ 1 domain in the interval 10–97 (TVTLQKDSKR…IAAIVVKRPR (88 aa)). A phosphoserine mark is found at serine 107, serine 127, serine 130, serine 140, serine 145, serine 147, serine 151, serine 173, serine 195, and serine 217. A compositionally biased stretch (basic and acidic residues) spans 125-137 (GRSARSGYSERSR). Residues 125-290 (GRSARSGYSE…AGQPDSDRPI (166 aa)) are disordered. The segment covering 146 to 214 (RSWEDSPERG…DYGRPGERSH (69 aa)) has biased composition (basic and acidic residues). A compositionally biased stretch (basic and acidic residues) spans 220–235 (RGYDRGYDRGYDRGYD). Serine 239 carries the post-translational modification Phosphoserine. 2 stretches are compositionally biased toward basic and acidic residues: residues 243–266 (EYGR…EHLR) and 274–288 (LRGR…DSDR). One can recognise a PDZ 2 domain in the interval 291–369 (GVLLMKSKAN…KLQLVVLRDS (79 aa)). Residues serine 309, serine 382, serine 384, serine 390, serine 399, serine 408, serine 414, and serine 415 each carry the phosphoserine modification. Residues 391–430 (EIESNRSFSPEERRQQYSDYDYHSSNEKLKERPNSREDMQ) form a disordered region. Residues 399-430 (SPEERRQQYSDYDYHSSNEKLKERPNSREDMQ) show a composition bias toward basic and acidic residues. Threonine 439 is subject to Phosphothreonine. A disordered region spans residues 456–490 (ENSKEPRYQEEPPAPQPKAAPRTFLRPSPEDEAIY). Phosphoserine is present on serine 483. Residues 493 to 574 (NTKMVRFKKG…GEMVTILAQS (82 aa)) form the PDZ 3 domain. Residue tyrosine 558 is modified to Phosphotyrosine. An SH3 domain is found at 588–653 (GDSFFIRSHF…PNKSRAEQMA (66 aa)). A Guanylate kinase-like domain is found at 679 to 860 (MKKNLRKSRE…WFGSLKDTIQ (182 aa)). Phosphoserine is present on residues serine 686 and serine 886. Phosphothreonine is present on threonine 889. 2 positions are modified to phosphoserine: serine 897 and serine 904. Disordered regions lie at residues 904-1065 (SDFE…VLGK) and 1100-1174 (DIYA…DTEL). Phosphothreonine is present on residues threonine 909 and threonine 917. Basic and acidic residues predominate over residues 940–951 (VQHEESIRKPSP). Residues serine 950, serine 962, serine 970, serine 990, and serine 1052 each carry the phosphoserine modification. Residues 978-1000 (EPPKAKTQNREESFDISRSHDYK) show a composition bias toward basic and acidic residues. The span at 1044-1056 (ESEEVGEGSEEQE) shows a compositional bias: acidic residues. Residue tyrosine 1102 is modified to Phosphotyrosine. Serine 1131 and serine 1143 each carry phosphoserine. Positions 1150–1159 (YRQQLSEHSK) are enriched in basic and acidic residues. An interaction with SCRIB region spans residues 1172–1174 (TEL).

The protein belongs to the MAGUK family. In terms of assembly, homodimer. Interacts (via PDZ2 domain) with TJP1/ZO1 (via PDZ2 domain). Interacts with UBN1. Interacts with SCRIB. Interacts with OCLN. Interacts with SAFB in the nucleus. Interacts with USP53 (via the C-terminal region). Interacts with claudins, including CLDN1, CLDN2, CLDN3, CLDN5 and CLDN7. Interacts with CLDN18. Interacts (via N-terminus) with CTNNA1. Post-translationally, phosphorylated.

Its subcellular location is the cell junction. The protein resides in the adherens junction. It is found in the cell membrane. The protein localises to the nucleus. It localises to the tight junction. Functionally, plays a role in tight junctions and adherens junctions. Acts as a positive regulator of RANKL-induced osteoclast differentiation, potentially via mediating downstream transcriptional activity. In Canis lupus familiaris (Dog), this protein is Tight junction protein 2.